The sequence spans 162 residues: NADH-quinone oxidoreductase subunit I 2 (162 aa).

4Fe-4S ferredoxin-type domains are found at residues 52–82 and 93–122; these read LRRYPNGEERCIACKLCEAVCPAQAITIEAG and ERYDIDMVKCIYCGLCQEACPVDAIVEGPN. [4Fe-4S] cluster is bound by residues Cys-62, Cys-65, Cys-68, Cys-72, Cys-102, Cys-105, Cys-108, and Cys-112.

The protein belongs to the complex I 23 kDa subunit family. In terms of assembly, NDH-1 is composed of 14 different subunits. Subunits NuoA, H, J, K, L, M, N constitute the membrane sector of the complex. The cofactor is [4Fe-4S] cluster.

The protein resides in the cell inner membrane. The enzyme catalyses a quinone + NADH + 5 H(+)(in) = a quinol + NAD(+) + 4 H(+)(out). Functionally, NDH-1 shuttles electrons from NADH, via FMN and iron-sulfur (Fe-S) centers, to quinones in the respiratory chain. The immediate electron acceptor for the enzyme in this species is believed to be ubiquinone. Couples the redox reaction to proton translocation (for every two electrons transferred, four hydrogen ions are translocated across the cytoplasmic membrane), and thus conserves the redox energy in a proton gradient. The sequence is that of NADH-quinone oxidoreductase subunit I 2 from Rhodopseudomonas palustris (strain BisA53).